The following is a 192-amino-acid chain: Ribose 1,5-bisphosphate phosphokinase PhnN (192 aa).

The protein belongs to the ribose 1,5-bisphosphokinase family.

The enzyme catalyses alpha-D-ribose 1,5-bisphosphate + ATP = 5-phospho-alpha-D-ribose 1-diphosphate + ADP. It functions in the pathway metabolic intermediate biosynthesis; 5-phospho-alpha-D-ribose 1-diphosphate biosynthesis; 5-phospho-alpha-D-ribose 1-diphosphate from D-ribose 5-phosphate (route II): step 3/3. Its function is as follows. Catalyzes the phosphorylation of ribose 1,5-bisphosphate to 5-phospho-D-ribosyl alpha-1-diphosphate (PRPP). In Achromobacter xylosoxidans (strain A8), this protein is Ribose 1,5-bisphosphate phosphokinase PhnN.